An 87-amino-acid chain; its full sequence is U3-theraphotoxin-Hhn1a 13 (87 aa).

Residues 1–24 (MVNMKASMFLTSAGLVPLFVVCYA) form the signal peptide. Residues 25-52 (SESEEKEFPKEMLSSIFAVDNDFKQEER) constitute a propeptide that is removed on maturation. 3 disulfides stabilise this stretch: C54–C67, C61–C72, and C66–C79.

Belongs to the neurotoxin 10 (Hwtx-1) family. 51 (Hntx-8) subfamily. Hntx-8 sub-subfamily. In terms of tissue distribution, expressed by the venom gland.

The protein localises to the secreted. Ion channel inhibitor. This chain is U3-theraphotoxin-Hhn1a 13, found in Cyriopagopus hainanus (Chinese bird spider).